Here is a 915-residue protein sequence, read N- to C-terminus: Bifunctional uridylyltransferase/uridylyl-removing enzyme (915 aa).

A uridylyltransferase region spans residues 1–360 (MFNCAVTAID…PDEERPKKQP (360 aa)). Residues 361–731 (INARFNQVGE…EHRELALDAV (371 aa)) are uridylyl-removing. The region spanning 478–594 (VDAHTLFLIR…TLFADLVGNV (117 aa)) is the HD domain. 2 ACT domains span residues 732–817 (QVFV…RIPR) and 840–915 (IMSL…NDSI).

The protein belongs to the GlnD family. Mg(2+) is required as a cofactor.

The enzyme catalyses [protein-PII]-L-tyrosine + UTP = [protein-PII]-uridylyl-L-tyrosine + diphosphate. It carries out the reaction [protein-PII]-uridylyl-L-tyrosine + H2O = [protein-PII]-L-tyrosine + UMP + H(+). Its activity is regulated as follows. Uridylyltransferase (UTase) activity is inhibited by glutamine, while glutamine activates uridylyl-removing (UR) activity. In terms of biological role, modifies, by uridylylation and deuridylylation, the PII regulatory proteins (GlnB and homologs), in response to the nitrogen status of the cell that GlnD senses through the glutamine level. Under low glutamine levels, catalyzes the conversion of the PII proteins and UTP to PII-UMP and PPi, while under higher glutamine levels, GlnD hydrolyzes PII-UMP to PII and UMP (deuridylylation). Thus, controls uridylylation state and activity of the PII proteins, and plays an important role in the regulation of nitrogen assimilation and metabolism. The chain is Bifunctional uridylyltransferase/uridylyl-removing enzyme from Psychrobacter arcticus (strain DSM 17307 / VKM B-2377 / 273-4).